A 256-amino-acid chain; its full sequence is NAD-dependent protein deacylase 4 (256 aa).

The Deacetylase sirtuin-type domain occupies M1–G250. G19–W39 contacts NAD(+). Y64 and R67 together coordinate substrate. An NAD(+)-binding site is contributed by Q98 to D101. H116 serves as the catalytic Proton acceptor. Positions 124, 127, 152, and 155 each coordinate Zn(2+). Residues G192–S194, N218–V220, and A236 contribute to the NAD(+) site.

This sequence belongs to the sirtuin family. Class III subfamily. The cofactor is Zn(2+).

The protein localises to the cytoplasm. The enzyme catalyses N(6)-acetyl-L-lysyl-[protein] + NAD(+) + H2O = 2''-O-acetyl-ADP-D-ribose + nicotinamide + L-lysyl-[protein]. It catalyses the reaction N(6)-succinyl-L-lysyl-[protein] + NAD(+) + H2O = 2''-O-succinyl-ADP-D-ribose + nicotinamide + L-lysyl-[protein]. Its function is as follows. NAD-dependent lysine deacetylase and desuccinylase that specifically removes acetyl and succinyl groups on target proteins. Modulates the activities of several proteins which are inactive in their acylated form. This is NAD-dependent protein deacylase 4 from Pseudomonas syringae pv. tomato (strain ATCC BAA-871 / DC3000).